A 383-amino-acid polypeptide reads, in one-letter code: Succinyl-diaminopimelate desuccinylase (383 aa).

H73 contacts Zn(2+). The active site involves D75. A Zn(2+)-binding site is contributed by D107. Residue E141 is the Proton acceptor of the active site. Zn(2+) contacts are provided by E142, E170, and H356.

This sequence belongs to the peptidase M20A family. DapE subfamily. As to quaternary structure, homodimer. Zn(2+) is required as a cofactor. Co(2+) serves as cofactor.

It carries out the reaction N-succinyl-(2S,6S)-2,6-diaminopimelate + H2O = (2S,6S)-2,6-diaminopimelate + succinate. The protein operates within amino-acid biosynthesis; L-lysine biosynthesis via DAP pathway; LL-2,6-diaminopimelate from (S)-tetrahydrodipicolinate (succinylase route): step 3/3. Functionally, catalyzes the hydrolysis of N-succinyl-L,L-diaminopimelic acid (SDAP), forming succinate and LL-2,6-diaminopimelate (DAP), an intermediate involved in the bacterial biosynthesis of lysine and meso-diaminopimelic acid, an essential component of bacterial cell walls. The protein is Succinyl-diaminopimelate desuccinylase of Pseudomonas aeruginosa (strain ATCC 15692 / DSM 22644 / CIP 104116 / JCM 14847 / LMG 12228 / 1C / PRS 101 / PAO1).